The primary structure comprises 299 residues: Protoheme IX farnesyltransferase (299 aa).

Transmembrane regions (helical) follow at residues 27 to 47 (VVAL…HEHF), 53 to 73 (LIAL…NHLI), 97 to 117 (FNVL…LMLW), 121 to 141 (LTAY…TLYL), 149 to 169 (IVIA…SITG), 175 to 195 (AWLL…ALAI), 222 to 242 (ILLY…VGMA), 244 to 264 (YLYL…AIKL), and 273 to 293 (AIEM…ALLL).

Belongs to the UbiA prenyltransferase family. Protoheme IX farnesyltransferase subfamily.

Its subcellular location is the cell inner membrane. It carries out the reaction heme b + (2E,6E)-farnesyl diphosphate + H2O = Fe(II)-heme o + diphosphate. The protein operates within porphyrin-containing compound metabolism; heme O biosynthesis; heme O from protoheme: step 1/1. Functionally, converts heme B (protoheme IX) to heme O by substitution of the vinyl group on carbon 2 of heme B porphyrin ring with a hydroxyethyl farnesyl side group. This is Protoheme IX farnesyltransferase from Vibrio vulnificus (strain YJ016).